We begin with the raw amino-acid sequence, 382 residues long: Chaperone protein DnaJ (382 aa).

The region spanning 5–70 is the J domain; that stretch reads DFYEILGVPK…QKRAAYDQYG (66 aa). A CR-type zinc finger spans residues 137 to 215; the sequence is GVTKEIRIPT…CHGHGRVEKT (79 aa). Residues Cys-150, Cys-153, Cys-167, Cys-170, Cys-189, Cys-192, Cys-203, and Cys-206 each contribute to the Zn(2+) site. CXXCXGXG motif repeat units follow at residues 150–157, 167–174, 189–196, and 203–210; these read CDICHGSG, CPTCHGSG, CPHCHGRG, and CNKCHGHG.

This sequence belongs to the DnaJ family. In terms of assembly, homodimer. The cofactor is Zn(2+).

The protein localises to the cytoplasm. Participates actively in the response to hyperosmotic and heat shock by preventing the aggregation of stress-denatured proteins and by disaggregating proteins, also in an autonomous, DnaK-independent fashion. Unfolded proteins bind initially to DnaJ; upon interaction with the DnaJ-bound protein, DnaK hydrolyzes its bound ATP, resulting in the formation of a stable complex. GrpE releases ADP from DnaK; ATP binding to DnaK triggers the release of the substrate protein, thus completing the reaction cycle. Several rounds of ATP-dependent interactions between DnaJ, DnaK and GrpE are required for fully efficient folding. Also involved, together with DnaK and GrpE, in the DNA replication of plasmids through activation of initiation proteins. The sequence is that of Chaperone protein DnaJ from Enterobacter sp. (strain 638).